Reading from the N-terminus, the 41-residue chain is Large ribosomal subunit protein bL36 (41 aa).

This sequence belongs to the bacterial ribosomal protein bL36 family.

This chain is Large ribosomal subunit protein bL36, found in Opitutus terrae (strain DSM 11246 / JCM 15787 / PB90-1).